The chain runs to 51 residues: Large ribosomal subunit protein eL39 (51 aa).

The disordered stretch occupies residues lysine 32 to alanine 51.

This sequence belongs to the eukaryotic ribosomal protein eL39 family.

This is Large ribosomal subunit protein eL39 from Pyrobaculum arsenaticum (strain DSM 13514 / JCM 11321 / PZ6).